The sequence spans 158 residues: NAD(P)H-quinone oxidoreductase subunit J, chloroplastic (158 aa).

It belongs to the complex I 30 kDa subunit family. NDH is composed of at least 16 different subunits, 5 of which are encoded in the nucleus.

The protein localises to the plastid. Its subcellular location is the chloroplast thylakoid membrane. It catalyses the reaction a plastoquinone + NADH + (n+1) H(+)(in) = a plastoquinol + NAD(+) + n H(+)(out). The catalysed reaction is a plastoquinone + NADPH + (n+1) H(+)(in) = a plastoquinol + NADP(+) + n H(+)(out). In terms of biological role, NDH shuttles electrons from NAD(P)H:plastoquinone, via FMN and iron-sulfur (Fe-S) centers, to quinones in the photosynthetic chain and possibly in a chloroplast respiratory chain. The immediate electron acceptor for the enzyme in this species is believed to be plastoquinone. Couples the redox reaction to proton translocation, and thus conserves the redox energy in a proton gradient. This is NAD(P)H-quinone oxidoreductase subunit J, chloroplastic from Platanus occidentalis (Sycamore).